A 283-amino-acid chain; its full sequence is MIQMVPIYSCSALLRRTIPKRPFYHVLSGLTVRFKVNPQLNYNLFRDLTRREYATNPSKTPHIKSKLLNIPNILTLSRIGCTPFIGLFIITNNLTPALGLFAFSSITDFMDGYIARKYGLKTIAGTILDPLADKLLMITTTLALSVPSGPQIIPVSIAAIILGRDVLLAISALFIRYSTLKLKYPGRVAWNSYWDIVRYPSAEVRPSQLSKWNTFFQMVYLGSGVLLLLYEKEEGCEKTEEDFEDRKQDFQKAFSYLGYVTATTTIMSGVSYALKRNAFKLLK.

Transmembrane regions (helical) follow at residues 83-103 (PFIG…LFAF), 155-175 (VSIA…ALFI), and 209-229 (LSKW…LLLL).

This sequence belongs to the CDP-alcohol phosphatidyltransferase class-I family. May be found in a large complex. The cofactor is Mg(2+).

The protein localises to the mitochondrion inner membrane. The catalysed reaction is a CDP-1,2-diacyl-sn-glycerol + a 1,2-diacyl-sn-glycero-3-phospho-(1'-sn-glycerol) = a cardiolipin + CMP + H(+). Catalyzes the synthesis of cardiolipin (CL) (diphosphatidylglycerol) by specifically transferring a phosphatidyl group from CDP-diacylglycerol to phosphatidylglycerol (PG). CL is a key phospholipid in mitochondrial membranes and plays important roles in maintaining the functional integrity and dynamics of mitochondria under both optimal and stress conditions. This Saccharomyces cerevisiae (strain ATCC 204508 / S288c) (Baker's yeast) protein is Cardiolipin synthase (CMP-forming) (CRD1).